Reading from the N-terminus, the 164-residue chain is C-type lectin 1 (164 aa).

The N-terminal stretch at 1 to 23 (MGRFLFASLGLLVVAFSLSGTGA) is a signal peptide. 3 disulfides stabilise this stretch: cysteine 27-cysteine 38, cysteine 55-cysteine 154, and cysteine 129-cysteine 146. The C-type lectin domain occupies 34–155 (YNVSCYKLFY…CTLLHPFLCQ (122 aa)). 2 N-linked (GlcNAc...) asparagine glycosylation sites follow: asparagine 35 and asparagine 109. Residues 119-121 (EPN) carry the Mannose-binding motif. Residues glutamate 127, asparagine 142, and aspartate 143 each coordinate Ca(2+).

It belongs to the true venom lectin family. As to expression, expressed by the venom gland.

The protein resides in the secreted. Its function is as follows. Mannose-binding lectin which recognizes specific carbohydrate structures and agglutinates a variety of animal cells by binding to cell-surface glycoproteins and glycolipids. May be a calcium-dependent lectin. The polypeptide is C-type lectin 1 (Hydrophis hardwickii (Hardwick's spine-bellied seasnake)).